Reading from the N-terminus, the 417-residue chain is Sulfate adenylyltransferase (417 aa).

Residues 1–10 are compositionally biased toward polar residues; sequence MTSITANQKP. Residues 1–20 form a disordered region; the sequence is MTSITANQKPSKLVPPHGSP.

The protein belongs to the sulfate adenylyltransferase family.

It carries out the reaction sulfate + ATP + H(+) = adenosine 5'-phosphosulfate + diphosphate. It participates in sulfur metabolism; hydrogen sulfide biosynthesis; sulfite from sulfate: step 1/3. This Psychrobacter arcticus (strain DSM 17307 / VKM B-2377 / 273-4) protein is Sulfate adenylyltransferase.